Here is a 548-residue protein sequence, read N- to C-terminus: ATP synthase subunit alpha (548 aa).

172-179 (GDRKTGKT) serves as a coordination point for ATP.

This sequence belongs to the ATPase alpha/beta chains family. F-type ATPases have 2 components, CF(1) - the catalytic core - and CF(0) - the membrane proton channel. CF(1) has five subunits: alpha(3), beta(3), gamma(1), delta(1), epsilon(1). CF(0) has three main subunits: a(1), b(2) and c(9-12). The alpha and beta chains form an alternating ring which encloses part of the gamma chain. CF(1) is attached to CF(0) by a central stalk formed by the gamma and epsilon chains, while a peripheral stalk is formed by the delta and b chains.

Its subcellular location is the cell membrane. It carries out the reaction ATP + H2O + 4 H(+)(in) = ADP + phosphate + 5 H(+)(out). In terms of biological role, produces ATP from ADP in the presence of a proton gradient across the membrane. The alpha chain is a regulatory subunit. The chain is ATP synthase subunit alpha from Mycolicibacterium smegmatis (strain ATCC 700084 / mc(2)155) (Mycobacterium smegmatis).